We begin with the raw amino-acid sequence, 154 residues long: 6,7-dimethyl-8-ribityllumazine synthase (154 aa).

Residues Trp-22, 56 to 58 (AWE), and 80 to 82 (CVI) each bind 5-amino-6-(D-ribitylamino)uracil. 85 to 86 (DT) contributes to the (2S)-2-hydroxy-3-oxobutyl phosphate binding site. His-88 serves as the catalytic Proton donor. Asn-113 contributes to the 5-amino-6-(D-ribitylamino)uracil binding site. Arg-127 is a binding site for (2S)-2-hydroxy-3-oxobutyl phosphate.

It belongs to the DMRL synthase family. In terms of assembly, forms an icosahedral capsid composed of 60 subunits, arranged as a dodecamer of pentamers.

The catalysed reaction is (2S)-2-hydroxy-3-oxobutyl phosphate + 5-amino-6-(D-ribitylamino)uracil = 6,7-dimethyl-8-(1-D-ribityl)lumazine + phosphate + 2 H2O + H(+). Its pathway is cofactor biosynthesis; riboflavin biosynthesis; riboflavin from 2-hydroxy-3-oxobutyl phosphate and 5-amino-6-(D-ribitylamino)uracil: step 1/2. Its function is as follows. Catalyzes the formation of 6,7-dimethyl-8-ribityllumazine by condensation of 5-amino-6-(D-ribitylamino)uracil with 3,4-dihydroxy-2-butanone 4-phosphate. This is the penultimate step in the biosynthesis of riboflavin. In Xanthomonas axonopodis pv. citri (strain 306), this protein is 6,7-dimethyl-8-ribityllumazine synthase.